A 209-amino-acid polypeptide reads, in one-letter code: Thymidylate kinase (209 aa).

13-20 (GLEGAGKS) serves as a coordination point for ATP.

Belongs to the thymidylate kinase family.

The catalysed reaction is dTMP + ATP = dTDP + ADP. In terms of biological role, phosphorylation of dTMP to form dTDP in both de novo and salvage pathways of dTTP synthesis. The protein is Thymidylate kinase of Shewanella sp. (strain ANA-3).